The sequence spans 127 residues: Riboflavin kinase (127 aa).

Position 10–15 (10–15 (GLGEGR)) interacts with CDP. Thr39 and Asn41 together coordinate Mg(2+). FMN is bound by residues Thr96 and Glu104. 109-112 (VHLR) contacts CDP.

The protein belongs to the archaeal riboflavin kinase family. Mg(2+) serves as cofactor.

It carries out the reaction riboflavin + CTP = CDP + FMN + H(+). The protein operates within cofactor biosynthesis; FMN biosynthesis; FMN from riboflavin (CTP route): step 1/1. In terms of biological role, catalyzes the CTP-dependent phosphorylation of riboflavin (vitamin B2) to form flavin mononucleotide (FMN). This Methanococcus maripaludis (strain C7 / ATCC BAA-1331) protein is Riboflavin kinase.